An 834-amino-acid chain; its full sequence is Unextended protein (834 aa).

Positions 1 to 20 (MNTYFISFITIIIFANGING) are cleaved as a signal peptide. The Extracellular segment spans residues 21–182 (TSVDTSNKLL…DFLKIKTFEP (162 aa)). N38, N42, and N156 each carry an N-linked (GlcNAc...) asparagine glycan. The 180-residue stretch at 182-361 (PLIPVWLAII…NDVNDLDKNE (180 aa)) folds into the CNNM transmembrane domain. Residues 183–203 (LIPVWLAIIIIVTCLGFSALF) form a helical membrane-spanning segment. The Cytoplasmic segment spans residues 204-244 (SGLNLGLMSMDRTELKILRNTGTEKEKKYASKIAPVRDQGN). Residues 245 to 265 (YLLCSILLGNVLVNSTFTILL) traverse the membrane as a helical segment. Residues 266–267 (DG) are Extracellular-facing. The chain crosses the membrane as a helical span at residues 268–288 (LTSGLFAVIFSTLAIVLFGEI). Residues 289–298 (TPQAVCSRHG) lie on the Cytoplasmic side of the membrane. Residues 299–319 (LAIGAKTILVTKTVMAITAPL) traverse the membrane as a helical segment. The Extracellular segment spans residues 320–834 (SYPVSRILDK…DKFESKQSKP (515 aa)). CBS domains lie at 380–441 (MTHI…NTPL) and 448–515 (YQNP…IVDE). N522 carries an N-linked (GlcNAc...) asparagine glycan. 604-656 (YIFTQGKAVDFFVLILEGRVEVTIGKEALMFESGPFTYFGTQALVPNVVIDSP) serves as a coordination point for a nucleoside 3',5'-cyclic phosphate. Residues 739–765 (CFAQNQSTRRLSNRSINSSPTNMNRSP) are disordered. The segment covering 740–763 (FAQNQSTRRLSNRSINSSPTNMNR) has biased composition (polar residues). N-linked (GlcNAc...) asparagine glycans are attached at residues N743, N751, and N790. The disordered stretch occupies residues 807–834 (SGEQDTTAASMPLLPKLDDKFESKQSKP). Residues 822–834 (KLDDKFESKQSKP) show a composition bias toward basic and acidic residues.

This sequence belongs to the ACDP family. As to quaternary structure, interacts with PRL-1, possibly at the plasma membrane.

The protein resides in the cell membrane. In terms of biological role, probable metal transporter. Acts downstream of PRL-1 and protects the nervous system against olfactory carbon dioxide stimulation. The protein is Unextended protein of Drosophila melanogaster (Fruit fly).